A 202-amino-acid chain; its full sequence is Imidazoleglycerol-phosphate dehydratase (202 aa).

The protein belongs to the imidazoleglycerol-phosphate dehydratase family.

The protein localises to the cytoplasm. It catalyses the reaction D-erythro-1-(imidazol-4-yl)glycerol 3-phosphate = 3-(imidazol-4-yl)-2-oxopropyl phosphate + H2O. It participates in amino-acid biosynthesis; L-histidine biosynthesis; L-histidine from 5-phospho-alpha-D-ribose 1-diphosphate: step 6/9. This Mycolicibacterium gilvum (strain PYR-GCK) (Mycobacterium gilvum (strain PYR-GCK)) protein is Imidazoleglycerol-phosphate dehydratase.